Reading from the N-terminus, the 82-residue chain is Putative defensin-like protein 191 (82 aa).

An N-terminal signal peptide occupies residues 1-28; the sequence is MAKSVNATGFITYMVIFLILTGISRVKA. 4 disulfide bridges follow: Cys-33–Cys-79, Cys-46–Cys-65, Cys-51–Cys-74, and Cys-55–Cys-76.

It belongs to the DEFL family.

It localises to the secreted. The chain is Putative defensin-like protein 191 from Arabidopsis thaliana (Mouse-ear cress).